The sequence spans 289 residues: MKIKDFLQENKISVGDNAIFLLEKLGIKDENLIKFLEREIGESAKMSKSKANVVDPEEAVEKYGADTVRLYILFAAPPEQDFEWTDEGIQGAYRFLQRYWNFVNKHLEKIKNLTYTVEELRNVQGKAKEVRREIHQTIADYRRDFEERYQFNTAIAKIMKLLNTLQDFSPQTEQDYKVLREGIETITLLLSPITPHIAEEVWEMLGNEGFIINQPIPEPDPEALKVEEIEIPVQVNGKLRARVKVPADADEETVKNIVLSDERVQKWVQGKEVKKFIYVKGKLVNVVVK.

Positions 45–49 (KMSKS) match the 'KMSKS' region motif. Residue lysine 48 coordinates ATP.

It belongs to the class-I aminoacyl-tRNA synthetase family. In terms of assembly, seems to consist of an alpha chain and a beta chain.

Its subcellular location is the cytoplasm. The catalysed reaction is tRNA(Leu) + L-leucine + ATP = L-leucyl-tRNA(Leu) + AMP + diphosphate. This is Leucine--tRNA ligase subunit beta (leuS') from Aquifex aeolicus (strain VF5).